Here is a 216-residue protein sequence, read N- to C-terminus: Flagellin B3 (216 aa).

A propeptide spanning residues 1–11 (MLLDYIKSRRG) is cleaved from the precursor.

This sequence belongs to the archaeal flagellin family.

The protein localises to the archaeal flagellum. Functionally, flagellin is the subunit protein which polymerizes to form the filaments of archaeal flagella. The chain is Flagellin B3 (flaB3) from Methanocaldococcus jannaschii (strain ATCC 43067 / DSM 2661 / JAL-1 / JCM 10045 / NBRC 100440) (Methanococcus jannaschii).